Consider the following 333-residue polypeptide: Diacylglycerol acyltransferase/mycolyltransferase Ag85C (333 aa).

The signal sequence occupies residues 1–44 (MKFLQQMRKLFGLAAKFPARLTIAVIGTALLAGLVGVVGDTAIA). 86 to 87 (LR) provides a ligand contact to substrate. Residues 102-112 (FEEYYHSGLSV) form a fibronectin-binding region. 2 residues coordinate substrate: Ser170 and Asn198. Ser170 serves as the catalytic Nucleophile. Residue Glu274 is part of the active site. Substrate is bound by residues 276-279 (LTLS) and 306-308 (HSW). The active site involves His306.

This sequence belongs to the mycobacterial A85 antigen family. In terms of assembly, homodimer.

It is found in the secreted. The enzyme catalyses an acyl-CoA + a 1,2-diacyl-sn-glycerol = a triacyl-sn-glycerol + CoA. It carries out the reaction 2 alpha,alpha'-trehalose 6-mycolate = alpha,alpha'-trehalose 6,6'-bismycolate + alpha,alpha-trehalose. In terms of biological role, the antigen 85 proteins (FbpA, FbpB, FbpC) are responsible for the high affinity of mycobacteria to fibronectin, a large adhesive glycoprotein, which facilitates the attachment of M.tuberculosis to murine alveolar macrophages (AMs). They also help to maintain the integrity of the cell wall by catalyzing the transfer of mycolic acids to cell wall arabinogalactan and through the synthesis of alpha,alpha-trehalose dimycolate (TDM, cord factor). They catalyze the transfer of a mycoloyl residue from one molecule of alpha,alpha-trehalose monomycolate (TMM) to another TMM, leading to the formation of TDM. The protein is Diacylglycerol acyltransferase/mycolyltransferase Ag85C (fbpC) of Mycobacterium leprae (strain TN).